The sequence spans 189 residues: Dual specificity phosphatase 29 (189 aa).

A Tyrosine-protein phosphatase domain is found at 33-182; sequence HVNEVWPGVY…LRELDTHLQE (150 aa). Position 126 to 133 (126 to 133) interacts with substrate; sequence HCVMGRSR. The Phosphocysteine intermediate role is filled by C127.

The protein belongs to the protein-tyrosine phosphatase family. Non-receptor class dual specificity subfamily.

The protein localises to the cytoplasm. It is found in the nucleus. It catalyses the reaction O-phospho-L-tyrosyl-[protein] + H2O = L-tyrosyl-[protein] + phosphate. It carries out the reaction O-phospho-L-seryl-[protein] + H2O = L-seryl-[protein] + phosphate. The enzyme catalyses O-phospho-L-threonyl-[protein] + H2O = L-threonyl-[protein] + phosphate. In terms of biological role, dual specificity phosphatase able to dephosphorylate phosphotyrosine, phosphoserine and phosphothreonine residues within the same substrate, with a preference for phosphotyrosine as a substrate. Involved in the modulation of AMPK and MAPK1/2 signaling pathways. This Danio rerio (Zebrafish) protein is Dual specificity phosphatase 29 (dusp29).